Here is a 704-residue protein sequence, read N- to C-terminus: Elongation factor G (704 aa).

Residues 8–291 enclose the tr-type G domain; sequence DRVRNIGIMA…AVIEYLASPV (284 aa). GTP-binding positions include 17–24, 90–94, and 144–147; these read AHIDAGKT, DTPGH, and NKMD.

Belongs to the TRAFAC class translation factor GTPase superfamily. Classic translation factor GTPase family. EF-G/EF-2 subfamily.

The protein localises to the cytoplasm. Its function is as follows. Catalyzes the GTP-dependent ribosomal translocation step during translation elongation. During this step, the ribosome changes from the pre-translocational (PRE) to the post-translocational (POST) state as the newly formed A-site-bound peptidyl-tRNA and P-site-bound deacylated tRNA move to the P and E sites, respectively. Catalyzes the coordinated movement of the two tRNA molecules, the mRNA and conformational changes in the ribosome. In Chlorobium chlorochromatii (strain CaD3), this protein is Elongation factor G.